We begin with the raw amino-acid sequence, 818 residues long: Sodium/hydrogen exchanger 1 (818 aa).

Residues 1-98 (MLLWPGASGL…FPVLGIDYQH (98 aa)) lie on the Extracellular side of the membrane. Residues 44–76 (STIRGSEPPRERSIGDVTTAPPELAPESRPVNH) are disordered. Asn-75 carries an N-linked (GlcNAc...) asparagine glycan. Residues 99-121 (VRIPFEIALWILLACLMKIGFHV) traverse the membrane as a helical segment. Residues 122–130 (IPTISSIVP) lie on the Cytoplasmic side of the membrane. A helical membrane pass occupies residues 131 to 148 (ESCLLIVVGLLVGGLIKG). Over 149–158 (VGETPPILQS) the chain is Extracellular. The chain crosses the membrane as a helical span at residues 159–176 (EVFFLFLLPPIILDAGYF). Residues 177-186 (LPLRQFTENL) are Cytoplasmic-facing. The chain crosses the membrane as a helical span at residues 187 to 215 (GTILIFAVVGTLWNAFFLGGLMYAVCLVG). At 216–222 (GEQINNI) the chain is on the extracellular side. The helical transmembrane segment at 223 to 249 (GLLENLLFGSIISAVDPVAVLAVFEEI) threads the bilayer. The Cytoplasmic portion of the chain corresponds to 250-252 (HIN). Residues 253 to 283 (ELLHILVFGESLLNDAVTVVLYHLFEEFANY) traverse the membrane as a helical segment. Over 284–287 (DRVG) the chain is Extracellular. Residues 288 to 322 (IVDIILGFLSFFVVSLGGVFVGVVYGVIAAFTSRF) form a helical membrane-spanning segment. At 323–328 (TSHIRV) the chain is on the cytoplasmic side. A helical membrane pass occupies residues 329 to 341 (IEPLFVFLYSYMA). At 342–350 (YLSAELFHL) the chain is on the extracellular side. Residues 351–371 (SGIMALIASGVVMRPYVEANI) traverse the membrane as a helical segment. The Cytoplasmic segment spans residues 372 to 373 (SH). The chain crosses the membrane as a helical span at residues 374–404 (KSHTTIKYFLKMWSSVSETLIFIFLGVSTVA). The Extracellular portion of the chain corresponds to 405–410 (GSHHWN). The chain crosses the membrane as a helical span at residues 411–438 (WTFVISTLLFCLIARVLGVLGLTWFINK). The Cytoplasmic segment spans residues 439–444 (FRIVKL). The helical transmembrane segment at 445 to 469 (TPKDQFIIAYGGLRGAIAFSLGYLL) threads the bilayer. Over 470–475 (DKKHFP) the chain is Extracellular. A helical transmembrane segment spans residues 476–505 (MCDLFLTAIITVIFFTVFVQGMTIRPLVDL). An interaction with TESC region spans residues 503-545 (VDLLAVKKKQETKRSINEEIHTQFLDHLLTGIEDICGHYGHHH). Over 506-818 (LAVKKKQETK…EGEPFIPKGQ (313 aa)) the chain is Cytoplasmic. The tract at residues 509 to 516 (KKKQETKR) is PI(4,5)P2-binding region. The tract at residues 515 to 545 (KRSINEEIHTQFLDHLLTGIEDICGHYGHHH) is interaction with CHP2. The tract at residues 540 to 545 (HYGHHH) is confers pH-dependent PI(4,5)P2 binding. The PI(4,5)P2-binding region stretch occupies residues 552–560 (RFNKKYVKK). Phosphoserine is present on residues Ser-599 and Ser-602. Residue Thr-603 is modified to Phosphothreonine. A phosphoserine mark is found at Ser-605 and Ser-648. The interaction with TESC stretch occupies residues 633–818 (KILRNNLQKT…EGEPFIPKGQ (186 aa)). The interval 633–818 (KILRNNLQKT…EGEPFIPKGQ (186 aa)) is interaction with CALM1. The interval 684–687 (LTVP) is interaction with PPP3CA. A phosphoserine mark is found at Ser-693, Ser-697, and Ser-703. The segment at 715–720 (PVITID) is interaction with PPP3CA. Ser-723, Ser-726, and Ser-729 each carry phosphoserine. Residues 741–818 (VLGLSRDPGR…EGEPFIPKGQ (78 aa)) are disordered. Thr-782 carries the phosphothreonine modification. The segment covering 785–794 (PSDSPSSQRI) has biased composition (polar residues). Phosphoserine occurs at positions 788, 790, and 799.

The protein belongs to the monovalent cation:proton antiporter 1 (CPA1) transporter (TC 2.A.36) family. In terms of assembly, homodimer; dimerization is crucial for its function. Oligomer. Interacts with CALM in a calcium-dependent manner. Interacts with TESC. Interacts (via the juxtamembrane region of the cytoplasmic C-terminal domain) with CHP1; the interaction occurs at the plasma membrane in a calcium-dependent manner. Interacts with CHP2; the interaction occurs in a calcium-dependent manner. Interacts with EZR; regulates the cytoskeletal interactions of SLC9A1 and promotes stress fiber formation. In terms of processing, ubiquitinated, leading to its degradation by the proteasome. Ubiquitination is reduced by CHP1. O-glycosylated. Post-translationally, palmitoylated; may play a major role in SLC9A1 regulation. In terms of processing, phosphorylation at Thr-782 increases SLC9A1 activity. Specifically dephosphorylated at Thr-782 by PPP3CA that negatively regulates SLC9A1 activity. Phosphorylation at Ser-648 by AKT1 reduces SLC9A1 binding to CALM1.

The protein resides in the cell membrane. Its subcellular location is the basolateral cell membrane. The enzyme catalyses Na(+)(in) + H(+)(out) = Na(+)(out) + H(+)(in). It catalyses the reaction Li(+)(out) + H(+)(in) = Li(+)(in) + H(+)(out). It carries out the reaction Li(+)(in) + Na(+)(out) = Li(+)(out) + Na(+)(in). Its activity is regulated as follows. Activated at acidic pHs. Inhibited by amiloride and 5-amino-substituted derivatives. Inhibited by cariporide and eniporide. Phosphatidylinositol 4,5-bisphosphate (PI(4,5)P2) and phosphatidylinositol 3,4,5-trisphosphate (PI(3,4,5)P3) bind and differentially regulate SLC9A1 activity. Electroneutral Na(+) /H(+) antiporter that extrudes Na(+) in exchange for external protons driven by the inward sodium ion chemical gradient, protecting cells from acidification that occurs from metabolism. Exchanges intracellular H(+) ions for extracellular Na(+) in 1:1 stoichiometry. Plays a key role in maintening intracellular pH neutral and cell volume, and thus is important for cell growth, proliferation, migration and survival. In addition, can transport lithium Li(+) and also functions as a Na(+)/Li(+) antiporter. SLC9A1 also functions in membrane anchoring and organization of scaffolding complexes that coordinate signaling inputs. In Bos taurus (Bovine), this protein is Sodium/hydrogen exchanger 1 (SLC9A1).